Here is a 393-residue protein sequence, read N- to C-terminus: Fractalkine (393 aa).

The first 24 residues, 1 to 24, serve as a signal peptide directing secretion; it reads MAPSQLAWLLRLAAFFHLCTLLAG. Residues 25-100 form a chemokine and involved in interaction with ITGAV:ITGB3 and ITGA4:ITGB1 region; sequence QHLGMTKCNI…HQTAALTRNG (76 aa). At 25-337 the chain is on the extracellular side; the sequence is QHLGMTKCNI…PDSQAATRRQ (313 aa). Disulfide bonds link Cys-32–Cys-58 and Cys-36–Cys-74. An N-linked (GlcNAc...) asparagine glycan is attached at Asn-33. The interval 101-337 is mucin-like stalk; the sequence is GKFEKRVDNV…PDSQAATRRQ (237 aa). Disordered regions lie at residues 114 to 184 and 213 to 303; these read ITSA…PQST and EKAT…SGSQ. 2 stretches are compositionally biased toward polar residues: residues 153 to 172 and 223 to 240; these read GTSQ…TSKA and ALST…NVGS. A helical membrane pass occupies residues 338 to 358; it reads AVGLLAFLGLLFCLGVAMFAY. The Cytoplasmic portion of the chain corresponds to 359–393; sequence QSLQGCPRKMAGEMVEGLRYVPRSCGSNSYVLVPV.

Belongs to the intercrine delta family. In terms of assembly, monomer. Forms a ternary complex with CX3CR1 and ITGAV:ITGB3 or ITGA4:ITGB1. Post-translationally, a soluble short form may be released by proteolytic cleavage from the long membrane-anchored form. As to expression, highest levels in brain (neurons). Significant levels in kidney, heart, lung and adrenal gland.

Its subcellular location is the cell membrane. It localises to the secreted. In terms of biological role, chemokine that acts as a ligand for both CX3CR1 and integrins ITGAV:ITGB3 and ITGA4:ITGB1. The CX3CR1-CX3CL1 signaling exerts distinct functions in different tissue compartments, such as immune response, inflammation, cell adhesion and chemotaxis. Regulates leukocyte adhesion and migration processes at the endothelium. Can activate integrins in both a CX3CR1-dependent and CX3CR1-independent manner. In the presence of CX3CR1, activates integrins by binding to the classical ligand-binding site (site 1) in integrins. In the absence of CX3CR1, binds to a second site (site 2) in integrins which is distinct from site 1 and enhances the binding of other integrin ligands to site 1. The soluble form is chemotactic for T-cells and monocytes, but not for neutrophils. Its function is as follows. The membrane-bound form promotes adhesion of those leukocytes to endothelial cells. The sequence is that of Fractalkine (Cx3cl1) from Rattus norvegicus (Rat).